A 929-amino-acid polypeptide reads, in one-letter code: LPS-assembly protein LptD (929 aa).

The first 24 residues, 1 to 24 (MKLRFIRSAGWLFLLFCLACNARA), serve as a signal peptide directing secretion. The interval 26–208 (LPPLSSKPEQ…EAGDEKLRLA (183 aa)) is disordered. Basic and acidic residues predominate over residues 44–74 (GDDKPVVIDTERIRGHHEYESGTRSESELRS). The span at 154 to 164 (RTQSAPRTLSA) shows a compositional bias: polar residues. Positions 181 to 208 (DQDRPGFAEGERIGGHREEAGDEKLRLA) are enriched in basic and acidic residues.

It belongs to the LptD family. Component of the lipopolysaccharide transport and assembly complex. Interacts with LptE and LptA.

The protein resides in the cell outer membrane. In terms of biological role, together with LptE, is involved in the assembly of lipopolysaccharide (LPS) at the surface of the outer membrane. In Nitrosospira multiformis (strain ATCC 25196 / NCIMB 11849 / C 71), this protein is LPS-assembly protein LptD.